Here is a 115-residue protein sequence, read N- to C-terminus: NADH-ubiquinone oxidoreductase chain 3 (115 aa).

3 helical membrane-spanning segments follow: residues 3–23 (FVLA…LTFW), 55–75 (FFLV…LLPL), and 84–104 (LPLM…GLTY).

It belongs to the complex I subunit 3 family. As to quaternary structure, core subunit of respiratory chain NADH dehydrogenase (Complex I) which is composed of 45 different subunits. Interacts with TMEM186. Interacts with TMEM242.

The protein localises to the mitochondrion inner membrane. It catalyses the reaction a ubiquinone + NADH + 5 H(+)(in) = a ubiquinol + NAD(+) + 4 H(+)(out). Core subunit of the mitochondrial membrane respiratory chain NADH dehydrogenase (Complex I) which catalyzes electron transfer from NADH through the respiratory chain, using ubiquinone as an electron acceptor. Essential for the catalytic activity of complex I. The polypeptide is NADH-ubiquinone oxidoreductase chain 3 (Pongo pygmaeus (Bornean orangutan)).